Here is a 267-residue protein sequence, read N- to C-terminus: Undecaprenyl-diphosphatase (267 aa).

Transmembrane regions (helical) follow at residues 4–24 (LYALILGIIEGLTEFLPISST), 41–61 (FWKSFLIIIQLGSILAVIFVF), 69–89 (LDIWLKLAVGFFPTGVIGLFV), 96–116 (LFNGWVVVGMLIFGGVVFILI), 173–193 (AAEFSFLLAIPTMIIATAYSI), 207–227 (IPLGIGFITAFIVAVLVIKFF), and 239–259 (FGIYRIILGFVFFYLYYSGIL).

This sequence belongs to the UppP family.

It localises to the cell inner membrane. It catalyses the reaction di-trans,octa-cis-undecaprenyl diphosphate + H2O = di-trans,octa-cis-undecaprenyl phosphate + phosphate + H(+). In terms of biological role, catalyzes the dephosphorylation of undecaprenyl diphosphate (UPP). Confers resistance to bacitracin. This Campylobacter jejuni subsp. jejuni serotype O:23/36 (strain 81-176) protein is Undecaprenyl-diphosphatase.